The primary structure comprises 522 residues: Leucine-rich repeat transmembrane neuronal protein 1 (522 aa).

An N-terminal signal peptide occupies residues 1-34 (MDFLLLGLCLYWLLRRPSGVVLCLLGACFQMLPA). In terms of domain architecture, LRRNT spans 35–63 (APSGCPQLCRCEGRLLYCEALNPTEAPHN). At 35 to 427 (APSGCPQLCR…HAENAVQIHK (393 aa)) the chain is on the extracellular side. Asparagine 63 is a glycosylation site (N-linked (GlcNAc...) asparagine). LRR repeat units lie at residues 64 to 87 (LSGLLGLSLRYNSLSELRAGQFTG), 89 to 111 (MQLTWLYLDHNHICSVQGDAFQK), 112 to 135 (LRRVKELTLSSNQITQLPNTTFRP), 137 to 159 (PNLRSVDLSYNKLQALAPDLFHG), 161 to 183 (RKLTTLHMRANAIQFVPVRIFQD), 184 to 207 (CRSLKFLDIGYNQLKSLARNSFAG), 209 to 231 (FKLTELHLEHNDLVKVNFAHFPR), 233 to 255 (ISLHSLCLRRNKVAIVVSSLDWV), 256 to 278 (WNLKKMDLSGNEIEYMEPHVFET), and 279 to 302 (VPHLQSLQLDSNRLTYIEPRILNS). Asparagine 130 is a glycosylation site (N-linked (GlcNAc...) asparagine). The LRRCT domain occupies 314–365 (NLWDCGRNVCALASWLSNFQGRYDGNLQCASPEYAQGEDVLDAVYAFHLCED). Residue asparagine 380 is glycosylated (N-linked (GlcNAc...) asparagine). A disordered region spans residues 382 to 401 (SDLGPPASSATTLADGGEGQ). The helical transmembrane segment at 428-448 (VVTGTMALIFSFLIVVLVLYV) threads the bilayer. Topologically, residues 449–522 (SWKCFPASLR…HQQPARECEV (74 aa)) are cytoplasmic.

The protein belongs to the LRRTM family.

It localises to the cell membrane. It is found in the postsynaptic cell membrane. Exhibits strong synaptogenic activity, restricted to excitatory presynaptic differentiation, acting at both pre- and postsynaptic level. In Pongo abelii (Sumatran orangutan), this protein is Leucine-rich repeat transmembrane neuronal protein 1 (LRRTM1).